We begin with the raw amino-acid sequence, 355 residues long: Chorismate synthase (355 aa).

NADP(+) is bound at residue R48. Residues 126–128 (RSS), G278, 293–297 (KPIPS), and R319 each bind FMN.

Belongs to the chorismate synthase family. As to quaternary structure, homotetramer. FMNH2 serves as cofactor.

It carries out the reaction 5-O-(1-carboxyvinyl)-3-phosphoshikimate = chorismate + phosphate. It participates in metabolic intermediate biosynthesis; chorismate biosynthesis; chorismate from D-erythrose 4-phosphate and phosphoenolpyruvate: step 7/7. Its function is as follows. Catalyzes the anti-1,4-elimination of the C-3 phosphate and the C-6 proR hydrogen from 5-enolpyruvylshikimate-3-phosphate (EPSP) to yield chorismate, which is the branch point compound that serves as the starting substrate for the three terminal pathways of aromatic amino acid biosynthesis. This reaction introduces a second double bond into the aromatic ring system. This Oleidesulfovibrio alaskensis (strain ATCC BAA-1058 / DSM 17464 / G20) (Desulfovibrio alaskensis) protein is Chorismate synthase.